Consider the following 101-residue polypeptide: B3 domain-containing protein At1g08985 (101 aa).

Positions 7 to 101 (IVKTLSETDC…WQNTKFIFSM (95 aa)) form a DNA-binding region, TF-B3.

Its subcellular location is the nucleus. In Arabidopsis thaliana (Mouse-ear cress), this protein is B3 domain-containing protein At1g08985.